A 320-amino-acid polypeptide reads, in one-letter code: Ferrochelatase (320 aa).

Fe cation is bound by residues H194 and E275.

The protein belongs to the ferrochelatase family. In terms of assembly, monomer.

The protein localises to the cytoplasm. The enzyme catalyses heme b + 2 H(+) = protoporphyrin IX + Fe(2+). The protein operates within porphyrin-containing compound metabolism; protoheme biosynthesis; protoheme from protoporphyrin-IX: step 1/1. Catalyzes the ferrous insertion into protoporphyrin IX. In Salmonella agona (strain SL483), this protein is Ferrochelatase.